The chain runs to 744 residues: 5-methyltetrahydropteroyltriglutamate--homocysteine methyltransferase (744 aa).

Residues 17 to 20 (REVK) and Lys-110 contribute to the 5-methyltetrahydropteroyltri-L-glutamate site. Residues 422–424 (IGS) and Glu-475 each bind L-homocysteine. L-methionine contacts are provided by residues 422–424 (IGS) and Glu-475. Trp-552 is a binding site for 5-methyltetrahydropteroyltri-L-glutamate. Asp-590 contacts L-homocysteine. Asp-590 lines the L-methionine pocket. Glu-596 lines the 5-methyltetrahydropteroyltri-L-glutamate pocket. 3 residues coordinate Zn(2+): His-632, Cys-634, and Glu-656. His-685 serves as the catalytic Proton donor. Cys-717 serves as a coordination point for Zn(2+).

This sequence belongs to the vitamin-B12 independent methionine synthase family. Zn(2+) serves as cofactor.

It carries out the reaction 5-methyltetrahydropteroyltri-L-glutamate + L-homocysteine = tetrahydropteroyltri-L-glutamate + L-methionine. It functions in the pathway amino-acid biosynthesis; L-methionine biosynthesis via de novo pathway; L-methionine from L-homocysteine (MetE route): step 1/1. In terms of biological role, catalyzes the transfer of a methyl group from 5-methyltetrahydrofolate to homocysteine resulting in methionine formation. The chain is 5-methyltetrahydropteroyltriglutamate--homocysteine methyltransferase from Trichodesmium erythraeum (strain IMS101).